We begin with the raw amino-acid sequence, 168 residues long: Sec-independent protein translocase protein TatB (168 aa).

The chain crosses the membrane as a helical span at residues 1–21 (MIDLGISKLALIGAVALIVIG).

Belongs to the TatB family. As to quaternary structure, the Tat system comprises two distinct complexes: a TatABC complex, containing multiple copies of TatA, TatB and TatC subunits, and a separate TatA complex, containing only TatA subunits. Substrates initially bind to the TatABC complex, which probably triggers association of the separate TatA complex to form the active translocon.

The protein resides in the cell inner membrane. Part of the twin-arginine translocation (Tat) system that transports large folded proteins containing a characteristic twin-arginine motif in their signal peptide across membranes. Together with TatC, TatB is part of a receptor directly interacting with Tat signal peptides. TatB may form an oligomeric binding site that transiently accommodates folded Tat precursor proteins before their translocation. In Cupriavidus pinatubonensis (strain JMP 134 / LMG 1197) (Cupriavidus necator (strain JMP 134)), this protein is Sec-independent protein translocase protein TatB.